The following is an 89-amino-acid chain: Small ribosomal subunit protein uS15 (89 aa).

Belongs to the universal ribosomal protein uS15 family. In terms of assembly, part of the 30S ribosomal subunit. Forms a bridge to the 50S subunit in the 70S ribosome, contacting the 23S rRNA.

Its function is as follows. One of the primary rRNA binding proteins, it binds directly to 16S rRNA where it helps nucleate assembly of the platform of the 30S subunit by binding and bridging several RNA helices of the 16S rRNA. Functionally, forms an intersubunit bridge (bridge B4) with the 23S rRNA of the 50S subunit in the ribosome. In Geobacillus kaustophilus (strain HTA426), this protein is Small ribosomal subunit protein uS15.